We begin with the raw amino-acid sequence, 481 residues long: Protein nucleotidyltransferase YdiU (481 aa).

ATP is bound by residues Gly-85, Gly-87, Arg-88, Lys-108, Asp-120, Gly-121, Arg-172, and Arg-179. Catalysis depends on Asp-248, which acts as the Proton acceptor. Asn-249 and Asp-258 together coordinate Mg(2+). Residue Asp-258 coordinates ATP.

This sequence belongs to the SELO family. Requires Mg(2+) as cofactor. Mn(2+) is required as a cofactor.

It carries out the reaction L-seryl-[protein] + ATP = 3-O-(5'-adenylyl)-L-seryl-[protein] + diphosphate. The enzyme catalyses L-threonyl-[protein] + ATP = 3-O-(5'-adenylyl)-L-threonyl-[protein] + diphosphate. The catalysed reaction is L-tyrosyl-[protein] + ATP = O-(5'-adenylyl)-L-tyrosyl-[protein] + diphosphate. It catalyses the reaction L-histidyl-[protein] + UTP = N(tele)-(5'-uridylyl)-L-histidyl-[protein] + diphosphate. It carries out the reaction L-seryl-[protein] + UTP = O-(5'-uridylyl)-L-seryl-[protein] + diphosphate. The enzyme catalyses L-tyrosyl-[protein] + UTP = O-(5'-uridylyl)-L-tyrosyl-[protein] + diphosphate. Its function is as follows. Nucleotidyltransferase involved in the post-translational modification of proteins. It can catalyze the addition of adenosine monophosphate (AMP) or uridine monophosphate (UMP) to a protein, resulting in modifications known as AMPylation and UMPylation. The polypeptide is Protein nucleotidyltransferase YdiU (Cereibacter sphaeroides (strain ATCC 17025 / ATH 2.4.3) (Rhodobacter sphaeroides)).